Consider the following 643-residue polypeptide: MHIHKLKKKIKKKKEGKYLTKKHILRKLFLNEEEFRKLCIFKGIYPKDFKEIPLKYRKKFYKHKVFYTRNDFLKLSHEKIINDFRKIKIYLKKYKKCKLTLEDFTRSKNIVANFPVYKLEHIIKERYPILSYAVDHLDDALSCIIAYSQLPSNHKYGIKNNMVKTCEMLKDHFHYYVYKTNRIKKAFISVKGYYLQAEILKKKVTWIIPHIFTPYLDTSIDFKLISDFIEYYIALLKFVLFKLYKLDNMLYPPKQDNDLKNEKLAHLSYDKDYSTNENNIDINMNQELQSKCNVNTNEDLNTCQEKTKEKNHKSDNNPHEHTTNIDNNNFNNIHLQDNCDLNKNEGKNLTNNIIHKNSEADNGHVHPDDHIDIDEHNKLKELFKNHIFYIHNDMPFDVLSIIILSCGGKISWNSRISPIHYDDNNITHEIYEKDKNTIHLNNPENEYKRIHIQPQYIFDCLNEKNILPCSDYLTEKENLPVHLSPFIEDENFKNLVKKEEYTINKMLNQKIKEEQYKDFSKENNNIFKSPNYKEEEEEENDDRETANLILNNKRQAALNNQLERENEDINQLKENDTILNKQTDQTQILKTQNLKSQEQEIQRHKIVLSKKKRKLFARIDMAQKRQKATIDKFMKKINKNKSK.

The span at 305-323 shows a compositional bias: basic and acidic residues; it reads EKTKEKNHKSDNNPHEHTT. Residues 305–329 are disordered; it reads EKTKEKNHKSDNNPHEHTTNIDNNN. A BRCT domain is found at 378–474; that stretch reads KLKELFKNHI…NILPCSDYLT (97 aa). Residues 531–615 adopt a coiled-coil conformation; the sequence is NYKEEEEEEN…IVLSKKKRKL (85 aa).

The protein belongs to the pescadillo family. As to quaternary structure, interacts with dual specificity protein phosphatase YVH1.

It is found in the nucleus. The protein resides in the nucleolus. The protein localises to the nucleoplasm. Its function is as follows. Required for maturation of ribosomal RNAs and formation of the large ribosomal subunit. The protein is Pescadillo homolog of Plasmodium falciparum (isolate 3D7).